Here is a 119-residue protein sequence, read N- to C-terminus: Large ribosomal subunit protein bL20 (119 aa).

The protein belongs to the bacterial ribosomal protein bL20 family.

Its function is as follows. Binds directly to 23S ribosomal RNA and is necessary for the in vitro assembly process of the 50S ribosomal subunit. It is not involved in the protein synthesizing functions of that subunit. The chain is Large ribosomal subunit protein bL20 from Xanthomonas oryzae pv. oryzae (strain PXO99A).